The primary structure comprises 653 residues: Fructose-1,6-bisphosphatase class 3 (653 aa).

Belongs to the FBPase class 3 family. Requires Mn(2+) as cofactor.

The enzyme catalyses beta-D-fructose 1,6-bisphosphate + H2O = beta-D-fructose 6-phosphate + phosphate. The protein operates within carbohydrate biosynthesis; gluconeogenesis. This chain is Fructose-1,6-bisphosphatase class 3, found in Listeria innocua serovar 6a (strain ATCC BAA-680 / CLIP 11262).